We begin with the raw amino-acid sequence, 490 residues long: Tegument protein VP16 (490 aa).

Residues 11 to 35 (DADGVSPPPPRPAGGPKNTPAAPPL) form a disordered region. Phosphoserine is present on residues Ser16, Ser351, Ser411, and Ser453. Residues 411–490 (STTAPITDVS…DAMGIDDFGG (80 aa)) are transcriptional activation.

This sequence belongs to the herpesviridae tegument protein VP16 protein family. In terms of assembly, interacts with VP22. Interacts with gH (via C-terminus). Interacts with the virion host shutoff protein (vhs). Interacts with VP11/12. Associates with the VP16-induced complex; binding to host HCFC1 activates VP16 for association with the octamer motif-binding host protein POU2F1, to form a multiprotein-DNA complex responsible for activating transcription of the viral immediate early genes.

The protein localises to the virion tegument. It is found in the host nucleus. Its function is as follows. Transcriptional activator of immediate-early (IE) gene products (alpha genes). Acts as a key activator of lytic infection by initiating the lytic program through the assembly of the transcriptional regulatory VP16-induced complex composed of VP16 and two cellular factors, HCFC1 and POU2F 1. VP16-induced complex represents a regulatory switch: when it is on, it promotes IE-gene expression and thus lytic infection, and when it is off, it limits IE-gene transcription favoring latent infection. May play a role in the aggregation of tegument proteins around nucleocapsids during virus morphogenesis. The chain is Tegument protein VP16 from Human herpesvirus 2 (strain 333) (HHV-2).